The sequence spans 164 residues: Probable metalloprotease y4qB (164 aa).

The region spanning 5 to 142 (IWIPESVVEA…WLPHAWIGQL (138 aa)) is the MPN domain. Zn(2+)-binding residues include H89, H91, and D103.

This sequence belongs to the peptidase M67B family.

In Sinorhizobium fredii (strain NBRC 101917 / NGR234), this protein is Probable metalloprotease y4qB.